Here is a 167-residue protein sequence, read N- to C-terminus: Small heat shock protein C1 (167 aa).

The sHSP domain occupies 59 to 167; sequence PLYESNSIKS…EQDAREITIN (109 aa).

The protein belongs to the small heat shock protein (HSP20) family.

The chain is Small heat shock protein C1 (hspC1) from Rickettsia felis (strain ATCC VR-1525 / URRWXCal2) (Rickettsia azadi).